Reading from the N-terminus, the 955-residue chain is Protein translocase subunit SecA (955 aa).

Residues Gln90, 108-112 (GEGKT), and Asp509 contribute to the ATP site. The tract at residues 537-571 (EGHRPPVPLQRSGAEGGGGFAAKAAPASGPHGHAP) is disordered. The segment covering 557 to 571 (AAKAAPASGPHGHAP) has biased composition (low complexity).

This sequence belongs to the SecA family. As to quaternary structure, monomer and homodimer. Part of the essential Sec protein translocation apparatus which comprises SecA, SecYEG and auxiliary proteins SecDF. Other proteins may also be involved.

It localises to the cell inner membrane. The protein localises to the cellular thylakoid membrane. Its subcellular location is the cytoplasm. It catalyses the reaction ATP + H2O + cellular proteinSide 1 = ADP + phosphate + cellular proteinSide 2.. Its function is as follows. Part of the Sec protein translocase complex. Interacts with the SecYEG preprotein conducting channel. Has a central role in coupling the hydrolysis of ATP to the transfer of proteins into and across the cell membrane, serving as an ATP-driven molecular motor driving the stepwise translocation of polypeptide chains across the membrane. Functionally, probably participates in protein translocation into and across both the cytoplasmic and thylakoid membranes in cyanobacterial cells. This chain is Protein translocase subunit SecA, found in Synechococcus sp. (strain WH7803).